An 813-amino-acid polypeptide reads, in one-letter code: Polycomb group protein FERTILIZATION-INDEPENDENT SEED 2 (813 aa).

Residues 1–27 (MARKSIRGKEVVMVSDDDDDDDDVDDD) form a disordered region. The segment covering 15–26 (SDDDDDDDDVDD) has biased composition (acidic residues). A C2H2-type zinc finger spans residues 134–155 (CPFCLIPCGGHEGLQLHLKSSH). Disordered stretches follow at residues 197 to 216 (SPLT…DDSN), 232 to 261 (DLPR…SEKI), and 274 to 648 (ESSE…RKEL). A compositionally biased stretch (basic and acidic residues) spans 232 to 246 (DLPRGTENDSTHVND). Residues 243–264 (HVNDDNVSSPPRAHSSEKISDI) form an A-1 repeat. The tract at residues 243 to 542 (HVNDDNVSSP…HSSKKNKSTR (300 aa)) is 12 X approximate repeat A. The stretch at 265-281 (LTTTQLAIAESSEPKVP) is one B-1 repeat. A 7 X approximate repeat B region spans residues 265–640 (LTTTQLAIAE…KAEPSEPKVT (376 aa)). The A-2 repeat unit spans residues 282 to 304 (HVNDGNVSSPPRAHSSAEKNEST). Basic and acidic residues-rich tracts occupy residues 296 to 307 (SSAEKNESTHVN), 319 to 331 (HSLE…HVNE), and 344 to 353 (KKNESTHMND). One copy of the A-3 repeat lies at 305-327 (HVNDDDDVSSPPRAHSLEKNEST). An A-4 repeat occupies 328–349 (HVNEDNISSPPKAHSSKKNEST). An A-5 repeat occupies 350-371 (HMNDEDVSFPPRTRSSKETSDI). The stretch at 372–388 (LTTTQPAIVEPSEPKVR) is one B-2 repeat. Residues 388 to 402 (RRGSRRKQLYAKRYK) are compositionally biased toward basic residues. Residues 403 to 419 (ARETQPAIAESSEPKVL) form a B-3 repeat. Composition is skewed to basic and acidic residues over residues 414 to 423 (SEPKVLHVND) and 453 to 462 (SEPKVPHVND). One copy of the A-6 repeat lies at 420-441 (HVNDENVSSPPEAHSLEKASDI). Residues 442 to 458 (LTTTQPAIAESSEPKVP) form a B-4 repeat. The stretch at 459-481 (HVNDENVSSTPRAHSSKKNKSTR) is one A-7 repeat. Basic residues predominate over residues 472 to 481 (HSSKKNKSTR). The stretch at 482-502 (KNVDNVPSPPKTRSSKKTSDI) is one A-8 repeat. A compositionally biased stretch (polar residues) spans 501 to 512 (DILTTTQPTIAE). A B-5 repeat occupies 503–519 (LTTTQPTIAESSEPKVR). A compositionally biased stretch (basic and acidic residues) spans 514–523 (SEPKVRHVND). The A-9 repeat unit spans residues 520–542 (HVNDDNVSSTPRAHSSKKNKSTR). The stretch at 543–563 (KNDDNIPSPPKTRSSKKTSNI) is one A-10 repeat. The stretch at 564–579 (LTRTQPAIAESEPKVP) is one B-6 repeat. A compositionally biased stretch (basic and acidic residues) spans 574–586 (SEPKVPHVNDDKV). One copy of the A-11 repeat lies at 580-601 (HVNDDKVSSTPRAHSSKKNKST). A compositionally biased stretch (basic residues) spans 593-602 (HSSKKNKSTH). One copy of the A-12 repeat lies at 602-623 (HKKDDNASLPPKTRSSKKTSDI). One copy of the B-7 repeat lies at 624–640 (LATTQPAKAEPSEPKVT). A VEFS-box region spans residues 648–783 (LHAERCEAKR…CAKTFHKCTT (136 aa)).

It belongs to the VEFS (VRN2-EMF2-FIS2-SU(Z)12) family. In terms of assembly, probably indirectly associated with FIE and/or MEA. In plants, PcG complexes are probably composed of a member of the EZ family (CLF or MEA), FIE, and a member of the VEFS family (FIS2, VRN2 or EMF2). Weakly expressed. Expressed in late siliques.

Its subcellular location is the nucleus. In terms of biological role, polycomb group (PcG) protein. PcG proteins act by forming multiprotein complexes, which are required to maintain the transcriptionally repressive state of homeotic genes throughout development. PcG proteins are not required to initiate repression, but to maintain it during later stages of development. They probably act via the methylation of histones, rendering chromatin heritably changed in its expressibility. Required to prevent the proliferation of the central cell by repressing unknown target genes before fertilization. Regulates the anteroposterior organization of the endosperm. The sequence is that of Polycomb group protein FERTILIZATION-INDEPENDENT SEED 2 from Arabidopsis thaliana (Mouse-ear cress).